Here is a 214-residue protein sequence, read N- to C-terminus: Ribosomal RNA small subunit methyltransferase G (214 aa).

S-adenosyl-L-methionine-binding positions include Gly72, Phe77, 125 to 126 (VE), and Arg141.

Belongs to the methyltransferase superfamily. RNA methyltransferase RsmG family.

The protein localises to the cytoplasm. It carries out the reaction guanosine(527) in 16S rRNA + S-adenosyl-L-methionine = N(7)-methylguanosine(527) in 16S rRNA + S-adenosyl-L-homocysteine. Its function is as follows. Specifically methylates the N7 position of guanine in position 527 of 16S rRNA. The sequence is that of Ribosomal RNA small subunit methyltransferase G from Sinorhizobium fredii (strain NBRC 101917 / NGR234).